The primary structure comprises 434 residues: Angio-associated migratory cell protein (434 aa).

The tract at residues 1–63 is disordered; it reads MESESESGAA…EEEEEEGNEE (63 aa). Serine 20 bears the Phosphoserine mark. The span at 39–62 shows a compositional bias: acidic residues; that stretch reads DPDDLAQEMEDVDFEEEEEEEGNE. WD repeat units follow at residues 89–129, 132–171, 173–212, 214–254, 258–299, 315–354, 356–395, and 398–433; these read LHSA…LLFE, GHKDSVTCAGFSHDSTLVATGDMSGLLKVWQVDTKEEVWS, EAGDLEWMEWHPRAPVLLAGTADGNTWMWKVPNGDCKTFQ, PNCP…HVLK, GHQG…GVFR, SESNSVESLGFCSVMPLAAVGYLDGTLAIYDLATQTLRHQ, QHQSGIVQLLWEAGTAVVYTCSLDGIVRLWDARTGRLLTD, and GHTAEILDFALSKDASLVVTTSGDHKAKVFCVQRPD.

As to expression, expressed in metastatic melanoma, liver, skin, kidney, heart, lung, lymph node, skeletal muscle and brain, and also in A2058 melanoma cells and activated T-cells (at protein level). Expressed in blood vessels. Strongly expressed in endothelial cells, cytotrophoblasts, and poorly differentiated. colon adenocarcinoma cells found in lymphatics.

The protein resides in the cell membrane. Its subcellular location is the cytoplasm. Its function is as follows. Plays a role in angiogenesis and cell migration. In smooth muscle cell migration, may act through the RhoA pathway. The chain is Angio-associated migratory cell protein (AAMP) from Homo sapiens (Human).